Reading from the N-terminus, the 271-residue chain is Energy-coupling factor transporter ATP-binding protein EcfA (271 aa).

In terms of domain architecture, ABC transporter spans 2-231 (ISIQNLTFYY…PLFLQQYKLT (230 aa)). ATP is bound at residue 34–41 (GHNGSGKS).

It belongs to the ABC transporter superfamily. Energy-coupling factor EcfA family. In terms of assembly, forms a stable energy-coupling factor (ECF) transporter complex composed of 2 membrane-embedded substrate-binding proteins (S component), 2 ATP-binding proteins (A component) and 2 transmembrane proteins (T component).

It localises to the cell membrane. Functionally, ATP-binding (A) component of a common energy-coupling factor (ECF) ABC-transporter complex. Unlike classic ABC transporters this ECF transporter provides the energy necessary to transport a number of different substrates. The sequence is that of Energy-coupling factor transporter ATP-binding protein EcfA from Aster yellows witches'-broom phytoplasma (strain AYWB).